We begin with the raw amino-acid sequence, 66 residues long: MAFLKKSLFLVLFLGLVSLSICDEEKRQDEDDDDDDDEEKRGVFDIIKDAGKQLVAHATGKIAEKV.

A signal peptide spans 1–22 (MAFLKKSLFLVLFLGLVSLSIC). Residues 23 to 39 (DEEKRQDEDDDDDDDEE) constitute a propeptide that is removed on maturation. A Valine amide modification is found at Val66.

In terms of tissue distribution, expressed by the skin glands.

It is found in the secreted. Functionally, has no antibacterial activity against Gram-negative bacteria E.coli ATCC 25922, S.pneumoniae ATCC 700603 and S.choleraesuis ATCC 14028 or against Gram-positive bacterium S.aureus ATCC 29313. Shows no hemolytic activity and no cytotoxicity. This Leptodactylus pustulatus (Ceara white-lipped frog) protein is Ocellatin-PT2.